The following is a 502-amino-acid chain: L-ornithine N(5)-monooxygenase (502 aa).

Over residues 1–10 (MEPVERKLEI) the composition is skewed to basic and acidic residues. The segment at 1 to 34 (MEPVERKLEIGSRSYSKMPLTQQRSSGEPPRLKA) is disordered. The segment covering 13 to 26 (RSYSKMPLTQQRSS) has biased composition (polar residues). Residues 83–91 (ERQKQFAWH) and glutamine 102 contribute to the FAD site. Lysine 107 serves as a coordination point for substrate. Position 168 (valine 168) interacts with FAD. NADP(+)-binding positions include 254–257 (SGQS) and arginine 279. Substrate-binding positions include 293–296 (NEVF) and asparagine 323. 323 to 325 (NYS) serves as a coordination point for NADP(+). FAD is bound at residue 466-468 (SLL). Serine 469 contacts substrate.

It belongs to the lysine N(6)-hydroxylase/L-ornithine N(5)-oxygenase family. In terms of assembly, homotetramer. FAD is required as a cofactor.

It carries out the reaction L-ornithine + NADPH + O2 = N(5)-hydroxy-L-ornithine + NADP(+) + H2O. The enzyme catalyses L-ornithine + NADH + O2 = N(5)-hydroxy-L-ornithine + NAD(+) + H2O. It participates in siderophore biosynthesis. Its function is as follows. Catalyzes the conversion of L-ornithine to N(5)-hydroxyornithine, the first step in the biosynthesis of all hydroxamate-containing siderophores, such as deferriferrichrysin. In Aspergillus oryzae (strain ATCC 42149 / RIB 40) (Yellow koji mold), this protein is L-ornithine N(5)-monooxygenase.